A 193-amino-acid chain; its full sequence is Penicillin-binding protein activator LpoB (193 aa).

Residues 1–16 form the signal peptide; the sequence is MKKYLGVILAALVLTG. Cys17 carries N-palmitoyl cysteine lipidation. Cys17 carries S-diacylglycerol cysteine lipidation. Residues 17 to 55 form a disordered region; it reads CPSRPPEPTEPPATIEPVEPQVPTTPTLPPGESVPQPPK. The span at 28–41 shows a compositional bias: low complexity; sequence PATIEPVEPQVPTT.

It belongs to the LpoB family. As to quaternary structure, interacts with PBP1b.

It localises to the cell outer membrane. In terms of biological role, regulator of peptidoglycan synthesis that is essential for the function of penicillin-binding protein 1B (PBP1b). This is Penicillin-binding protein activator LpoB from Pectobacterium carotovorum subsp. carotovorum (strain PC1).